Here is a 258-residue protein sequence, read N- to C-terminus: MAGVVEQKSGLVRDKLGEASKRNGLINTRSLVAESRDGLVSVYPAPQYQSCRVVGSVASAGPDGARNEPLQQLLDPSTLQQSVESRYRPNLILYSESVLRPWGDGVAADCCETTFIEDRSPTKESLEYPDGKFIDLSPEDIKIHTLSYDVEEEEEFQELESDYSSDTESEDNFLVMPPRDHLGLSVFSMLCCFWPLGIAAFYLSHETNKAVAKGDFHQASTSSRRALFLAVLSITIGTGIYVGVAVALIAYLSKSNHL.

At 1–181 (MAGVVEQKSG…NFLVMPPRDH (181 aa)) the chain is on the cytoplasmic side. S137 bears the Phosphoserine mark. Residues 182-202 (LGLSVFSMLCCFWPLGIAAFY) form a helical membrane-spanning segment. Over 203–228 (LSHETNKAVAKGDFHQASTSSRRALF) the chain is Extracellular. Residues 229-249 (LAVLSITIGTGIYVGVAVALI) constitute an intramembrane region (helical). Residues 250-258 (AYLSKSNHL) are Extracellular-facing.

Belongs to the CD225/Dispanin family. Homodimer. Interacts with GRIA1 and GRIA2.

Its subcellular location is the cell membrane. It is found in the early endosome membrane. The protein resides in the postsynaptic density membrane. It localises to the synapse. The protein localises to the cell projection. Its subcellular location is the dendrite. It is found in the dendritic spine. In terms of biological role, may regulate AMPA receptor content at nascent synapses, and have a role in postsynaptic development and maturation. This is Synapse differentiation-inducing gene protein 1 (SYNDIG1) from Bos taurus (Bovine).